A 243-amino-acid polypeptide reads, in one-letter code: MSEKKGALKVIPSASEEQLVQALGDLLQRCSQEALAKHDKFSVGLSGGSLVQLLTKALKSCNLKTAKWVFFFCDERYVRLDDSDSTYGAYRAEWLTQLPCIQESQFVRADTSQPLDACAADYEAKVKSQVDRFDLLLLGMGPDGHTCSLFPEQPATLQETKRLVIPIRNSPKPPPERITFTLPLINKARNVAFVVTGAAKASVVKSVFVDLDKKFPAAWVNPTKGQLTLIVDAGAGKEIETLK.

The protein belongs to the glucosamine/galactosamine-6-phosphate isomerase family. 6-phosphogluconolactonase subfamily.

It carries out the reaction 6-phospho-D-glucono-1,5-lactone + H2O = 6-phospho-D-gluconate + H(+). It functions in the pathway carbohydrate degradation; pentose phosphate pathway; D-ribulose 5-phosphate from D-glucose 6-phosphate (oxidative stage): step 2/3. Hydrolysis of 6-phosphogluconolactone to 6-phosphogluconate. The protein is Probable 6-phosphogluconolactonase of Drosophila melanogaster (Fruit fly).